Here is a 435-residue protein sequence, read N- to C-terminus: GTPase Der (435 aa).

EngA-type G domains lie at 4–167 (KIVA…SKND) and 175–350 (TKIA…QSLS). Residues 10–17 (GKPNVGKS), 57–61 (DTGGI), 119–122 (NKYD), 181–188 (GKPNVGKS), 228–232 (DTAGI), and 293–296 (NKWD) each bind GTP. The 85-residue stretch at 351-435 (VKVKTYVLNE…PINLIFRERK (85 aa)) folds into the KH-like domain.

It belongs to the TRAFAC class TrmE-Era-EngA-EngB-Septin-like GTPase superfamily. EngA (Der) GTPase family. As to quaternary structure, associates with the 50S ribosomal subunit.

GTPase that plays an essential role in the late steps of ribosome biogenesis. This chain is GTPase Der, found in Mycoplasma capricolum subsp. capricolum (strain California kid / ATCC 27343 / NCTC 10154).